The primary structure comprises 122 residues: Large ribosomal subunit protein bL19 (122 aa).

The protein belongs to the bacterial ribosomal protein bL19 family.

Its function is as follows. This protein is located at the 30S-50S ribosomal subunit interface and may play a role in the structure and function of the aminoacyl-tRNA binding site. The protein is Large ribosomal subunit protein bL19 of Acinetobacter baumannii (strain AB307-0294).